A 339-amino-acid polypeptide reads, in one-letter code: MSSQPVTFQAPVAPIIPTAWPVDDVLALFNLPFNDLIFRAQTVHRENFDPTEVELATLLSIKTGGCPEDCGYCPQAARYDTGVTAQKILPLEEVLTAAREAKAHGATRFCMGAAWREPKDRDLEKVEEMVREVKAMGLETCATLGMLGEGQAEKLKNAGLDYYNHNLDTAPEFYSNVISTRDYQNRIDTLGRVRGAGIKVCCGGIVGMGESRLQRAGLIAQLCNMDPYPESVPVNNLVQVEGTPLHGTDPIDPLEFVRTVAVARITMPKARVRLSAGRREMGEAIQALCFVAGANSIFYGDKLLTTGNPEAMADQELLEKLGMHTRSTAIDARCDVTPS.

The Radical SAM core domain maps to 51 to 278; that stretch reads TEVELATLLS…KARVRLSAGR (228 aa). Positions 66, 70, and 73 each coordinate [4Fe-4S] cluster. Residues cysteine 110, cysteine 141, cysteine 201, and arginine 273 each coordinate [2Fe-2S] cluster.

This sequence belongs to the radical SAM superfamily. Biotin synthase family. As to quaternary structure, homodimer. [4Fe-4S] cluster serves as cofactor. It depends on [2Fe-2S] cluster as a cofactor.

The catalysed reaction is (4R,5S)-dethiobiotin + (sulfur carrier)-SH + 2 reduced [2Fe-2S]-[ferredoxin] + 2 S-adenosyl-L-methionine = (sulfur carrier)-H + biotin + 2 5'-deoxyadenosine + 2 L-methionine + 2 oxidized [2Fe-2S]-[ferredoxin]. Its pathway is cofactor biosynthesis; biotin biosynthesis; biotin from 7,8-diaminononanoate: step 2/2. Catalyzes the conversion of dethiobiotin (DTB) to biotin by the insertion of a sulfur atom into dethiobiotin via a radical-based mechanism. The polypeptide is Biotin synthase (Janthinobacterium sp. (strain Marseille) (Minibacterium massiliensis)).